We begin with the raw amino-acid sequence, 1188 residues long: DNA-directed RNA polymerase subunit beta (1188 aa).

Positions 1149–1188 (ELRDLDEGEDDDVMHVDDLEKAREKQAQETPEVSENSEEK) are disordered. The segment covering 1161–1175 (VMHVDDLEKAREKQA) has biased composition (basic and acidic residues).

It belongs to the RNA polymerase beta chain family. As to quaternary structure, the RNAP catalytic core consists of 2 alpha, 1 beta, 1 beta' and 1 omega subunit. When a sigma factor is associated with the core the holoenzyme is formed, which can initiate transcription.

It carries out the reaction RNA(n) + a ribonucleoside 5'-triphosphate = RNA(n+1) + diphosphate. Functionally, DNA-dependent RNA polymerase catalyzes the transcription of DNA into RNA using the four ribonucleoside triphosphates as substrates. This Streptococcus uberis (strain ATCC BAA-854 / 0140J) protein is DNA-directed RNA polymerase subunit beta.